The sequence spans 112 residues: MKLSCLLLTLTIIFVLTIVHAPNVEAKDLADPESEAVGFADAFGEADAVGEADPNAGLGSVFGRLARILGRVIPKVAKKLGPKVAKVLPKVMKEAIPMAVEMAKSQEEQQPQ.

The signal sequence occupies residues 1–26 (MKLSCLLLTLTIIFVLTIVHAPNVEA). Positions 27-56 (KDLADPESEAVGFADAFGEADAVGEADPNA) are excised as a propeptide. The tract at residues 57-78 (GLGSVFGRLARILGRVIPKVAK) is critical for cytotoxic activity. Residues 93 to 106 (KEAIPMAVEMAKSQ) form an igE-binding determinant region.

The protein belongs to the formicidae venom precursor-01 superfamily. Ant pilosulin family. Expressed by the venom gland.

The protein resides in the secreted. Functionally, has strong cytotoxic and hemolytic activities. Is more potent against mononuclear leukocytes than against granulocytes. The synthesized peptide 57-76 shows a potent and broad spectrum antimicrobial activity against both Gram-positive and Gram-negative bacteria, and also against the fungus C.albicans. Adopts an alpha-helical structure. This Myrmecia pilosula (Jack jumper ant) protein is M-myrmeciitoxin-Mp1.